We begin with the raw amino-acid sequence, 219 residues long: Sugar fermentation stimulation protein homolog (219 aa).

This sequence belongs to the SfsA family.

The chain is Sugar fermentation stimulation protein homolog from Archaeoglobus fulgidus (strain ATCC 49558 / DSM 4304 / JCM 9628 / NBRC 100126 / VC-16).